The following is a 318-amino-acid chain: Small ribosomal subunit protein uS3 (318 aa).

One can recognise a KH type-2 domain in the interval 17 to 86 (MDEYFAEQLS…NPQIDAQEVK (70 aa)). A compositionally biased stretch (basic and acidic residues) spans 198–229 (SVEVEEPAEKPAEKPAEKPAEKAAAPKKEAAK). Residues 198-275 (SVEVEEPAEK…VQAETSEEIE (78 aa)) form a disordered region. Residues 234-250 (APAPEAPAPAPEAPAPA) are compositionally biased toward pro residues. Acidic residues predominate over residues 253 to 275 (EEAEVAEPEEAEEVQAETSEEIE).

This sequence belongs to the universal ribosomal protein uS3 family. As to quaternary structure, part of the 30S ribosomal subunit.

Binds the lower part of the 30S subunit head. The chain is Small ribosomal subunit protein uS3 from Methanosarcina acetivorans (strain ATCC 35395 / DSM 2834 / JCM 12185 / C2A).